The chain runs to 298 residues: Probable endonuclease 4 (298 aa).

9 residues coordinate Zn(2+): H69, H111, E146, D180, H183, H215, D228, H230, and E260.

This sequence belongs to the AP endonuclease 2 family. It depends on Zn(2+) as a cofactor.

It carries out the reaction Endonucleolytic cleavage to 5'-phosphooligonucleotide end-products.. Endonuclease IV plays a role in DNA repair. It cleaves phosphodiester bonds at apurinic or apyrimidinic (AP) sites, generating a 3'-hydroxyl group and a 5'-terminal sugar phosphate. The protein is Probable endonuclease 4 of Bacillus cereus (strain G9842).